The following is a 293-amino-acid chain: ATP synthase subunit gamma, mitochondrial (293 aa).

A mitochondrion-targeting transit peptide spans 1-21 (MFALRTAARPAARSVGATRNY).

In terms of assembly, F-type ATP synthases have 2 components, the catalytic core F(1) and the membrane-embedded component F(0), linked together by a central stalk and a peripheral stalk. The central stalk, also called rotor shaft, is often seen as part of F(1). The peripheral stalk is seen as part of F(0). F(0) contains the membrane channel next to the rotor. F-type ATP synthases form dimers but each monomer functions independently in ATP generation. The dimer consists of 17 different polypeptides: ATP1 (subunit alpha, 3 molecules per monomer, part of F(1)), ATP2 (subunit beta, 3 copies per monomer, part of F(1)), ATP3 (subunit gamma, part of the central stalk), ATP4 (subunit b, part of the peripheral stalk), ATP5/OSCP (subunit 5/OSCP, part of the peripheral stalk), ATP6 (subunit a, part of the peripheral stalk), ATP7 (subunit d, part of the peripheral stalk), ATP8 (subunit 8, part of the peripheral stalk), OLI1 (subunit c, part of the rotor, 10 molecules per monomer), ATP14 (subunit h, part of the peripheral stalk), ATP15 (subunit epsilon, part of the central stalk), ATP16 (subunit delta, part of the central stalk), ATP17 (subunit f, part of the peripheral stalk), ATP18 (subunit i/j, part of the peripheral stalk), ATP19 (subunit k, dimer-specific, at interface between monomers), ATP20 (subunit g, at interface between monomers), TIM11 (subunit e, at interface between monomers).

It is found in the mitochondrion inner membrane. Functionally, mitochondrial membrane ATP synthase (F(1)F(0) ATP synthase or Complex V) produces ATP from ADP in the presence of a proton gradient across the membrane which is generated by electron transport complexes of the respiratory chain. F-type ATP synthases consist of two structural domains, F(1) - containing the extramembraneous catalytic core, and F(0) - containing the membrane proton channel, linked together by a central stalk and a peripheral stalk. During catalysis, ATP synthesis in the catalytic domain of F(1) is coupled via a rotary mechanism of the central stalk subunits to proton translocation. Part of the complex F(1) domain and the central stalk which is part of the complex rotary element. The gamma/ATP3 subunit protrudes into the catalytic domain formed of alpha/ATP1(3)beta/ATP2(3). Rotation of the central stalk against the surrounding alpha/ATP1(3)beta/ATP2(3) subunits leads to hydrolysis of ATP in three separate catalytic sites on the beta/ATP2 subunits. The chain is ATP synthase subunit gamma, mitochondrial from Yarrowia lipolytica (strain CLIB 122 / E 150) (Yeast).